A 247-amino-acid polypeptide reads, in one-letter code: tRNA pseudouridine synthase A (247 aa).

The active-site Nucleophile is D53. Y111 provides a ligand contact to substrate.

The protein belongs to the tRNA pseudouridine synthase TruA family. Homodimer.

It carries out the reaction uridine(38/39/40) in tRNA = pseudouridine(38/39/40) in tRNA. Its function is as follows. Formation of pseudouridine at positions 38, 39 and 40 in the anticodon stem and loop of transfer RNAs. The chain is tRNA pseudouridine synthase A from Bacillus velezensis (strain DSM 23117 / BGSC 10A6 / LMG 26770 / FZB42) (Bacillus amyloliquefaciens subsp. plantarum).